We begin with the raw amino-acid sequence, 166 residues long: Small ribosomal subunit protein uS9 (166 aa).

Residues methionine 1–glutamate 16 are compositionally biased toward acidic residues. The tract at residues methionine 1 to glycine 45 is disordered.

This sequence belongs to the universal ribosomal protein uS9 family.

In Nocardioides sp. (strain ATCC BAA-499 / JS614), this protein is Small ribosomal subunit protein uS9.